The chain runs to 258 residues: U6 snRNA phosphodiesterase 1 (258 aa).

A disordered region spans residues 1 to 20 (MALVDYGGSSSSASEDEDCT). H117 acts as the Proton acceptor in catalysis. Residues 117-119 (HLS), Y200, and 202-208 (PASFHVS) each bind AMP. Residues Y200 and 204 to 208 (SFHVS) contribute to the UMP site. H206 acts as the Proton donor in catalysis.

This sequence belongs to the 2H phosphoesterase superfamily. USB1 family.

It is found in the nucleus. The catalysed reaction is a 3'-end uridylyl-uridine-RNA = a 3'-end 2',3'-cyclophospho-uridine-RNA + uridine. Functionally, 3'-5' RNA exonuclease that trims the 3' end of oligo(U) tracts of the pre-U6 small nuclear RNA (snRNA) molecule, leading to the formation of a mature U6 snRNA 3' end-terminated with a 2',3'-cyclic phosphate. Participates in the U6 snRNA 3' end processing that prevents U6 snRNA degradation. The chain is U6 snRNA phosphodiesterase 1 from Drosophila melanogaster (Fruit fly).